Reading from the N-terminus, the 627-residue chain is Threonine--tRNA ligase (627 aa).

The interval 221 to 523 (DHRKLGRELG…LIEHFAGDFP (303 aa)) is catalytic. Zn(2+) contacts are provided by Cys-319, His-370, and His-500.

Belongs to the class-II aminoacyl-tRNA synthetase family. Homodimer. Zn(2+) is required as a cofactor.

It is found in the cytoplasm. The enzyme catalyses tRNA(Thr) + L-threonine + ATP = L-threonyl-tRNA(Thr) + AMP + diphosphate + H(+). Functionally, catalyzes the attachment of threonine to tRNA(Thr) in a two-step reaction: L-threonine is first activated by ATP to form Thr-AMP and then transferred to the acceptor end of tRNA(Thr). Also edits incorrectly charged L-seryl-tRNA(Thr). In Gloeobacter violaceus (strain ATCC 29082 / PCC 7421), this protein is Threonine--tRNA ligase.